Consider the following 363-residue polypeptide: G kinase-anchoring protein 1-B (363 aa).

Disordered regions lie at residues 17–79 (ALLK…RNLA) and 147–182 (VNGDGVNGVPQSKKVNKKDKRKNNQGKDKPLTVPLK). The stretch at 50–79 (KTNVNEKKKEKRRKKKEQQQSEANELRNLA) forms a coiled coil. The span at 160–170 (KVNKKDKRKNN) shows a compositional bias: basic residues. Coiled-coil stretches lie at residues 249-298 (DGKT…QEGE) and 328-348 (AALEQERSKVKVLQAEQVRYQ).

Belongs to the GKAP1 family.

The protein resides in the golgi apparatus. Functionally, may play a role in the regulation of insulin-dependent IRS1 tyrosine phosphorylation in adipocytes. The chain is G kinase-anchoring protein 1-B (gkap1-b) from Xenopus laevis (African clawed frog).